A 140-amino-acid chain; its full sequence is Putative pre-16S rRNA nuclease (140 aa).

This sequence belongs to the YqgF nuclease family.

The protein localises to the cytoplasm. Its function is as follows. Could be a nuclease involved in processing of the 5'-end of pre-16S rRNA. This Endomicrobium trichonymphae protein is Putative pre-16S rRNA nuclease.